Reading from the N-terminus, the 669-residue chain is MSKEAVQQRIEELRDLLNTFNYQYHVLDNPSVSDAEYDRNMQELIKLETENPEFITEDSPSVRVGGAVLDIFEKVTHKSPMLSLGNAFNEGDLRDFDRRVRQGIDGVNVRYICELKIDGLAVSLHYEKGRFIQGSTRGDGITGEDITQNLKTIKAIPLRLQEEVTLEVRGEAYMPKRSFVKLNEEKEQNGEAVFANPRNAAAGSLRQLDPKIAAKRNLSMFVYGLADIEGKTITSHSEALDFLGELGFKTNPNRRICETIEEVIAYVEEWQEKRPNLDYEIDGIVIKVDDVTLQERLGTTAKSPRWAIAYKFPAEEVVTRLTGIELSVGRTGVVTPTAELEPVRVAGTIVRRASLHNEDLIREKDIRIGDYVVVKKAGDIIPEVVNVVFDKRTGKEEAYHMPTHCPTCDSGLVRLEEEVALRCINPACPAQIREGLIHFVSRNAMNIDGLGERVITQLFEANYIRTFADLYGLTKDQLLQLDRFGEKSASNLVQAIEASKENSLERLLFGLGIRHVGAKAARTLAEHFETMDNLVKAGEEELKAINEIGEKMAQSIVTYFDNEDVLHLIQQFKDYGVNMTYKGIKRADLQNIASYFAGKTVVLTGKLEVMGRSEAKKKIEALGGKVTGSVSKSTDLVIAGEAAGSKLAQAEKHNIEIWNEERFLQELNK.

NAD(+) contacts are provided by residues 34-38, 83-84, and glutamate 114; these read DAEYD and SL. Lysine 116 functions as the N6-AMP-lysine intermediate in the catalytic mechanism. Residues arginine 137, glutamate 171, lysine 287, and lysine 311 each contribute to the NAD(+) site. Zn(2+) is bound by residues cysteine 405, cysteine 408, cysteine 423, and cysteine 428. A BRCT domain is found at 591-669; that stretch reads NIASYFAGKT…EERFLQELNK (79 aa).

Belongs to the NAD-dependent DNA ligase family. LigA subfamily. Mg(2+) serves as cofactor. The cofactor is Mn(2+).

It carries out the reaction NAD(+) + (deoxyribonucleotide)n-3'-hydroxyl + 5'-phospho-(deoxyribonucleotide)m = (deoxyribonucleotide)n+m + AMP + beta-nicotinamide D-nucleotide.. Functionally, DNA ligase that catalyzes the formation of phosphodiester linkages between 5'-phosphoryl and 3'-hydroxyl groups in double-stranded DNA using NAD as a coenzyme and as the energy source for the reaction. It is essential for DNA replication and repair of damaged DNA. The sequence is that of DNA ligase from Bacillus cytotoxicus (strain DSM 22905 / CIP 110041 / 391-98 / NVH 391-98).